The chain runs to 475 residues: Eukaryotic translation initiation factor 3 subunit L (475 aa).

One can recognise a PCI domain in the interval 257-451 (DAIRMFSHIL…DLDYAMQGDL (195 aa)).

It belongs to the eIF-3 subunit L family. As to quaternary structure, component of the eukaryotic translation initiation factor 3 (eIF-3) complex.

The protein resides in the cytoplasm. Functionally, component of the eukaryotic translation initiation factor 3 (eIF-3) complex, which is involved in protein synthesis of a specialized repertoire of mRNAs and, together with other initiation factors, stimulates binding of mRNA and methionyl-tRNAi to the 40S ribosome. The eIF-3 complex specifically targets and initiates translation of a subset of mRNAs involved in cell proliferation. This Botryotinia fuckeliana (strain B05.10) (Noble rot fungus) protein is Eukaryotic translation initiation factor 3 subunit L.